Consider the following 167-residue polypeptide: Lipoprotein signal peptidase (167 aa).

Transmembrane regions (helical) follow at residues 67–87 and 91–111; these read WILVALTLFAILLLSIWLWRA and LVALALGCIIGGALGNAIDRI. Active-site residues include Asp118 and Asp136. The chain crosses the membrane as a helical span at residues 127-147; sequence FSWYVFNLADAAIVAGVALLI.

The protein belongs to the peptidase A8 family.

It localises to the cell inner membrane. It carries out the reaction Release of signal peptides from bacterial membrane prolipoproteins. Hydrolyzes -Xaa-Yaa-Zaa-|-(S,diacylglyceryl)Cys-, in which Xaa is hydrophobic (preferably Leu), and Yaa (Ala or Ser) and Zaa (Gly or Ala) have small, neutral side chains.. Its pathway is protein modification; lipoprotein biosynthesis (signal peptide cleavage). This protein specifically catalyzes the removal of signal peptides from prolipoproteins. The protein is Lipoprotein signal peptidase of Beijerinckia indica subsp. indica (strain ATCC 9039 / DSM 1715 / NCIMB 8712).